The primary structure comprises 596 residues: Beta-fructofuranosidase, insoluble isoenzyme 6 (596 aa).

The first 25 residues, 1–25 (MALAGLPLSVFAIAVHFCLVFSSSS), serve as a signal peptide directing secretion. Residues 49-52 (WQND), Gln68, and Trp76 each bind substrate. Asp52 is an active-site residue. Asn80 is a glycosylation site (N-linked (GlcNAc...) asparagine). Substrate contacts are provided by residues 113-114 (AS), 177-178 (RD), and Glu232. Asn335 carries an N-linked (GlcNAc...) asparagine glycan. The cysteines at positions 436 and 482 are disulfide-linked. Residue Asn556 is glycosylated (N-linked (GlcNAc...) asparagine).

It belongs to the glycosyl hydrolase 32 family. In terms of tissue distribution, expressed in roots. Weakly expressed in flowers.

It localises to the secreted. The protein resides in the extracellular space. The protein localises to the apoplast. It is found in the cell wall. It catalyses the reaction Hydrolysis of terminal non-reducing beta-D-fructofuranoside residues in beta-D-fructofuranosides.. The sequence is that of Beta-fructofuranosidase, insoluble isoenzyme 6 (CIN6) from Oryza sativa subsp. japonica (Rice).